The chain runs to 306 residues: Motility gene repressor MogR (306 aa).

It is found in the cytoplasm. Transcriptional repressor of flagellar motility genes, such as flaA, during extracellular growth at 37 degrees Celsius and during intracellular infection. Binds directly to the gene promoter region and probably prevents RNA polymerase binding. At low temperatures, MogR repression activity is modulated by the DegU response regulator in an unknown mechanism. Required for full virulence. The chain is Motility gene repressor MogR (mogR) from Listeria monocytogenes serotype 1/2a (strain 10403S).